A 391-amino-acid chain; its full sequence is MFGTLASGEIETARLNRNLGITSNLGVSCGGFEDFAMRFEGENMVPYKGEEQEEEEDQVVVNETTPFQFQQPLFLQQQQKLVVGYALTSKKKKSFLQPKLELLARRKGIFFVAIDLNRPLSEQGPFDVVLHKLLGKEWEEVIEDYQQKHPEVTVLDPPGSIQRIYNRQSMLQGMADLKLSDCSGSLFVPKQMVVLKDSAASADAVVEAGLKFPLVAKPLWIDGTAKSHQLYLAYDRRSLAELDPPLVLQEFVNHGGVMFKVFVVGDVIKVMRRFSLPNVSNCEKAKVDGVFQFPRVSSAAASADNADLDPRVAELPPKPFLEALVKELRSLLGLRLFNIDMIREHGSKNVFYVIDINYFPGYGKLPDYEQVFVDFFQNLAQVKYKKRQHCK.

Positions 90 and 132 each coordinate 1D-myo-inositol 1,3,4-trisphosphate. ATP-binding residues include R167 and K217. Positions 178-384 (KLSDCSGSLF…FFQNLAQVKY (207 aa)) constitute an ATP-grasp domain. The 1D-myo-inositol 1,3,4-trisphosphate site is built by H228 and K260. Residues 249–260 (QEFVNHGGVMFK) and S275 each bind ATP. Mg(2+) contacts are provided by D340, D355, and N357. N357 is a 1D-myo-inositol 1,3,4-trisphosphate binding site.

The protein belongs to the ITPK1 family. In terms of assembly, monomer. The cofactor is Mg(2+). Expressed in seedling roots, cotyledons, rosette leaves, cauline leaves, stems, flowers, siliques and seeds.

The enzyme catalyses 1D-myo-inositol 3,4,5,6-tetrakisphosphate + ATP = 1D-myo-inositol 1,3,4,5,6-pentakisphosphate + ADP + H(+). The catalysed reaction is 1D-myo-inositol 1,3,4-trisphosphate + ATP = 1D-myo-inositol 1,3,4,5-tetrakisphosphate + ADP + H(+). It catalyses the reaction 1D-myo-inositol 1,3,4-trisphosphate + ATP = 1D-myo-inositol 1,3,4,6-tetrakisphosphate + ADP + H(+). Functionally, kinase that can phosphorylate various inositol polyphosphate such as Ins(3,4,5,6)P4 or Ins(1,3,4)P3. Phosphorylates Ins(3,4,5,6)P4 to form InsP5. This reaction is thought to have regulatory importance, since Ins(3,4,5,6)P4 is an inhibitor of plasma membrane Ca(2+)-activated Cl(-) channels, while Ins(1,3,4,5,6)P5 is not. Also phosphorylates Ins(1,3,4)P3 or a racemic mixture of Ins(1,4,6)P3 and Ins(3,4,6)P3 to form InsP4. Ins(1,3,4,6)P4 is an essential molecule in the hexakisphosphate (InsP6) pathway. Plays a role in seed coat development and lipid polyester barrier formation. This is Inositol-tetrakisphosphate 1-kinase 2 (ITPK2) from Arabidopsis thaliana (Mouse-ear cress).